The primary structure comprises 232 residues: BTB/POZ domain-containing protein KCTD11 (232 aa).

Residues 1–49 (MLGAMFRAGTPMPPNLNSQGGGHYFIDRDGKAFRHILNFLRLGRLDLPR) enclose the BTB domain.

Homopentamer. Interacts with KCTD6 and KCTD21; KCTD11 and KCTD6 or KCTD21 may associate in pentameric assemblies. Component of the BCR(KCTD11) E3 ubiquitin ligase complex, at least composed of CUL3 and KCTD11 and RBX1. Interacts (via BTB domain) with CUL3; initially a 4:4 stoichiometry has been reported, however, electron microscopy revealed pentameric states of the BTB domain. In terms of tissue distribution, higher expression in cerebellum than in whole brain and lower expression in medulloblastoma.

It functions in the pathway protein modification; protein ubiquitination. Functionally, plays a role as a marker and a regulator of neuronal differentiation; Up-regulated by a variety of neurogenic signals, such as retinoic acid, epidermal growth factor/EGF and NGFB/nerve growth factor. Induces apoptosis, growth arrest and the expression of cyclin-dependent kinase inhibitor CDKN1B. Plays a role as a tumor repressor and inhibits cell growth and tumorigenicity of medulloblastoma (MDB). Acts as a probable substrate-specific adapter for a BCR (BTB-CUL3-RBX1) E3 ubiquitin-protein ligase complex towards HDAC1. Functions as antagonist of the Hedgehog pathway on cell proliferation and differentiation by affecting the nuclear transfer of transcription factor GLI1, thus maintaining cerebellar granule cells in undifferentiated state, this effect probably occurs via HDAC1 down-regulation, keeping GLI1 acetylated and inactive. When knock-down, Hedgehog antagonism is impaired and proliferation of granule cells is sustained. Activates the caspase cascade. This chain is BTB/POZ domain-containing protein KCTD11 (KCTD11), found in Homo sapiens (Human).